A 51-amino-acid chain; its full sequence is UPF0391 membrane protein Psyc_0130 (51 aa).

Transmembrane regions (helical) follow at residues 6-26 and 28-47; these read IIFA…VAGL and ANFA…VAFV.

Belongs to the UPF0391 family.

It is found in the cell membrane. The sequence is that of UPF0391 membrane protein Psyc_0130 from Psychrobacter arcticus (strain DSM 17307 / VKM B-2377 / 273-4).